The sequence spans 126 residues: MHKYLYIAAGGAAGSLCRYLVSGVTQRMFATSFPIGTFSVNMIGCLFFGLVTGLFEERLGLPPEMRLLILTGFMGAFTTFSTYMFESTNLIKSGQWAMTALNIGGQSILGFACIVGGLALGRLIVS.

The next 4 helical transmembrane spans lie at 4 to 24, 35 to 55, 67 to 87, and 100 to 120; these read YLYIAAGGAAGSLCRYLVSGV, IGTFSVNMIGCLFFGLVTGLF, LLILTGFMGAFTTFSTYMFES, and ALNIGGQSILGFACIVGGLAL. The Na(+) site is built by Gly-75 and Thr-78.

This sequence belongs to the fluoride channel Fluc/FEX (TC 1.A.43) family.

The protein resides in the cell inner membrane. It carries out the reaction fluoride(in) = fluoride(out). Its activity is regulated as follows. Na(+) is not transported, but it plays an essential structural role and its presence is essential for fluoride channel function. Its function is as follows. Fluoride-specific ion channel. Important for reducing fluoride concentration in the cell, thus reducing its toxicity. This is Fluoride-specific ion channel FluC from Maridesulfovibrio salexigens (strain ATCC 14822 / DSM 2638 / NCIMB 8403 / VKM B-1763) (Desulfovibrio salexigens).